We begin with the raw amino-acid sequence, 180 residues long: Oligoribonuclease (180 aa).

The region spanning 7–168 is the Exonuclease domain; it reads LVWIDLEMTG…QDIRDSIDEL (162 aa). Tyr128 is an active-site residue.

This sequence belongs to the oligoribonuclease family.

The protein localises to the cytoplasm. 3'-to-5' exoribonuclease specific for small oligoribonucleotides. The polypeptide is Oligoribonuclease (Dichelobacter nodosus (strain VCS1703A)).